We begin with the raw amino-acid sequence, 330 residues long: Alpha-1,6-glucosyltransferase (330 aa).

Belongs to the glycosyltransferase group 1 family. The cofactor is Does not require a metal cofactor..

It is found in the cytoplasm. The protein operates within protein modification; protein glycosylation. Catalyzes the transfer of a glucose moiety from UDP-glucose to another glucose that is N-linked to an asparagine within a peptide or protein. Can act in a repetitive manner, and this way it elongates the N-linked glucose by a glycan chain consisting of several alpha-1-&gt;6 linked glucose residues. Is able to add up to six glucose units in vitro. Cannot use UDP-Gal, UDP-GlcNAc or UDP-GalNAc as a substrate donor. The chain is Alpha-1,6-glucosyltransferase from Actinobacillus pleuropneumoniae serotype 7 (strain AP76).